A 382-amino-acid polypeptide reads, in one-letter code: Queuine tRNA-ribosyltransferase (382 aa).

Catalysis depends on Asp-96, which acts as the Proton acceptor. Residues 96–100 (DSGGF), Asp-151, Gln-194, and Gly-221 contribute to the substrate site. Positions 252–258 (GVGAPDS) are RNA binding. Asp-271 acts as the Nucleophile in catalysis. An RNA binding; important for wobble base 34 recognition region spans residues 276–280 (TRIAR). Zn(2+) contacts are provided by Cys-309, Cys-311, Cys-314, and His-340.

This sequence belongs to the queuine tRNA-ribosyltransferase family. As to quaternary structure, homodimer. Within each dimer, one monomer is responsible for RNA recognition and catalysis, while the other monomer binds to the replacement base PreQ1. The cofactor is Zn(2+).

The enzyme catalyses 7-aminomethyl-7-carbaguanine + guanosine(34) in tRNA = 7-aminomethyl-7-carbaguanosine(34) in tRNA + guanine. It functions in the pathway tRNA modification; tRNA-queuosine biosynthesis. Its function is as follows. Catalyzes the base-exchange of a guanine (G) residue with the queuine precursor 7-aminomethyl-7-deazaguanine (PreQ1) at position 34 (anticodon wobble position) in tRNAs with GU(N) anticodons (tRNA-Asp, -Asn, -His and -Tyr). Catalysis occurs through a double-displacement mechanism. The nucleophile active site attacks the C1' of nucleotide 34 to detach the guanine base from the RNA, forming a covalent enzyme-RNA intermediate. The proton acceptor active site deprotonates the incoming PreQ1, allowing a nucleophilic attack on the C1' of the ribose to form the product. After dissociation, two additional enzymatic reactions on the tRNA convert PreQ1 to queuine (Q), resulting in the hypermodified nucleoside queuosine (7-(((4,5-cis-dihydroxy-2-cyclopenten-1-yl)amino)methyl)-7-deazaguanosine). The protein is Queuine tRNA-ribosyltransferase of Lactococcus lactis subsp. lactis (strain IL1403) (Streptococcus lactis).